A 497-amino-acid chain; its full sequence is Glycerol kinase (497 aa).

Residue Thr-11 participates in ADP binding. Thr-11, Ser-12, and Ser-13 together coordinate ATP. Residue Thr-11 coordinates sn-glycerol 3-phosphate. Arg-15 is a binding site for ADP. Sn-glycerol 3-phosphate is bound by residues Arg-81, Glu-82, Tyr-133, and Asp-242. Residues Arg-81, Glu-82, Tyr-133, Asp-242, and Gln-243 each coordinate glycerol. ADP contacts are provided by Thr-264 and Gly-307. Positions 264, 307, 311, and 412 each coordinate ATP. ADP-binding residues include Gly-412 and Asn-416.

Belongs to the FGGY kinase family.

The enzyme catalyses glycerol + ATP = sn-glycerol 3-phosphate + ADP + H(+). The protein operates within polyol metabolism; glycerol degradation via glycerol kinase pathway; sn-glycerol 3-phosphate from glycerol: step 1/1. Its activity is regulated as follows. Inhibited by fructose 1,6-bisphosphate (FBP). In terms of biological role, key enzyme in the regulation of glycerol uptake and metabolism. Catalyzes the phosphorylation of glycerol to yield sn-glycerol 3-phosphate. In Polaromonas naphthalenivorans (strain CJ2), this protein is Glycerol kinase.